Reading from the N-terminus, the 450-residue chain is Ceramide glucosyltransferase (450 aa).

The Lumenal portion of the chain corresponds to 1–8 (MSDSGTLS). A helical transmembrane segment spans residues 9–29 (LIGGIVFLVLWVVVWSICLLG). Over 30–337 (WRTARIRYAH…IRVRKKMTLA (308 aa)) the chain is Cytoplasmic. Residue Asp96 is a short sequence motif, D1. Position 148 (Asp148) is a short sequence motif, D2. Asp286 is a short sequence motif (D3). Asp286 acts as the Proton acceptor in catalysis. The short motif at 323 to 327 (RRVRW) is the (Q/R)XXRW element. Residues 338 to 358 (ATLLEPLTESIISGLYGAWAI) traverse the membrane as a helical segment. At 359–361 (SRL) the chain is on the lumenal side. The chain crosses the membrane as a helical span at residues 362-382 (LGGNILPLFLLHMAAWISVDI). The Cytoplasmic segment spans residues 383–401 (STKRALETNIKGIGPPESK). The chain crosses the membrane as a helical span at residues 402 to 422 (VTFLMAWAARECLALPIWMLA). Over 423 to 450 (MTSSEVVWRGQKYKIIASGEAIRLGDRN) the chain is Lumenal.

Belongs to the glycosyltransferase 2 family.

The protein localises to the golgi apparatus membrane. The enzyme catalyses an N-acylsphing-4-enine + UDP-alpha-D-glucose = a beta-D-glucosyl-(1&lt;-&gt;1')-N-acylsphing-4-enine + UDP + H(+). Its pathway is lipid metabolism; sphingolipid metabolism. In terms of biological role, catalyzes the final step in the biosynthesis of the membrane lipid glucosylceramide (GluCer), the transfer of glucose to ceramide. Glucosylceramides play important roles in growth, differentiation and pathogenicity. Essential factor in determining the success of fungal infection by regulating survival of yeast cells during the initial colonization of the host lung. In Cryptococcus neoformans var. grubii serotype A (strain H99 / ATCC 208821 / CBS 10515 / FGSC 9487) (Filobasidiella neoformans var. grubii), this protein is Ceramide glucosyltransferase.